Reading from the N-terminus, the 474-residue chain is MKLSMPRFDQAPVLVVGDVMLDRYWHGGTSRISPEAPVPVVKVDQIEDRPGGAANVALNIAALGAPASLVGVTGDDEAAESLANSLKAAGVLARFQRIANQPTIVKLRVISRHQQLLRIDFEEAFNTDPLALSAEVYSLLDGIKVLVLSDYGKGALRNHQALIQAARKRGIPVLADPKGKDFTIYRGASLITPNLSEFEAIVGHCEDEAQLVTKGAQLMQELDLGALLVTRGEHGMTLLRPDQQALHLPARAREVFDVTGAGDTVISTLAAAIAAGEELPHAVALANLAAGIVVGKLGTAAISAPELRRAIQREEGSERGVLGLEQLLLAVDDARAHKEKIVFTNGCFDILHAGHVTYLEQARALGDRLIVAVNDDASVSRLKGPGRPINSVDRRMAVLAGLGAVDWVISFPEGTPENLLSHVKPDVLVKGGDYGVDQVVGADIVQAYGGDVRVLGLVENSSTTAIVEKIRGQG.

The tract at residues 1-318 (MKLSMPRFDQ…RAIQREEGSE (318 aa)) is ribokinase. 194 to 197 (NLSE) provides a ligand contact to ATP. D263 is a catalytic residue. Positions 343–474 (FTNGCFDILH…AIVEKIRGQG (132 aa)) are cytidylyltransferase.

It in the N-terminal section; belongs to the carbohydrate kinase PfkB family. The protein in the C-terminal section; belongs to the cytidylyltransferase family. Homodimer.

The catalysed reaction is D-glycero-beta-D-manno-heptose 7-phosphate + ATP = D-glycero-beta-D-manno-heptose 1,7-bisphosphate + ADP + H(+). It catalyses the reaction D-glycero-beta-D-manno-heptose 1-phosphate + ATP + H(+) = ADP-D-glycero-beta-D-manno-heptose + diphosphate. It functions in the pathway nucleotide-sugar biosynthesis; ADP-L-glycero-beta-D-manno-heptose biosynthesis; ADP-L-glycero-beta-D-manno-heptose from D-glycero-beta-D-manno-heptose 7-phosphate: step 1/4. The protein operates within nucleotide-sugar biosynthesis; ADP-L-glycero-beta-D-manno-heptose biosynthesis; ADP-L-glycero-beta-D-manno-heptose from D-glycero-beta-D-manno-heptose 7-phosphate: step 3/4. In terms of biological role, catalyzes the phosphorylation of D-glycero-D-manno-heptose 7-phosphate at the C-1 position to selectively form D-glycero-beta-D-manno-heptose-1,7-bisphosphate. Catalyzes the ADP transfer from ATP to D-glycero-beta-D-manno-heptose 1-phosphate, yielding ADP-D-glycero-beta-D-manno-heptose. This Pseudomonas savastanoi pv. phaseolicola (strain 1448A / Race 6) (Pseudomonas syringae pv. phaseolicola (strain 1448A / Race 6)) protein is Bifunctional protein HldE.